A 110-amino-acid chain; its full sequence is Small ribosomal subunit protein bS16 (110 aa).

A disordered region spans residues 84–110 (KREARNNPEKAVPRKERKAAAEAAAKK).

Belongs to the bacterial ribosomal protein bS16 family.

This Rhodopseudomonas palustris (strain BisB18) protein is Small ribosomal subunit protein bS16.